The following is a 399-amino-acid chain: Acetate kinase (399 aa).

Asparagine 7 contacts Mg(2+). An ATP-binding site is contributed by lysine 14. Arginine 91 is a binding site for substrate. Aspartate 148 (proton donor/acceptor) is an active-site residue. Residues 208–212 (HIGNG), 283–285 (DMR), and 331–335 (GVGEN) contribute to the ATP site. Residue glutamate 385 coordinates Mg(2+).

The protein belongs to the acetokinase family. Homodimer. Mg(2+) is required as a cofactor. Requires Mn(2+) as cofactor.

The protein localises to the cytoplasm. The enzyme catalyses acetate + ATP = acetyl phosphate + ADP. It participates in metabolic intermediate biosynthesis; acetyl-CoA biosynthesis; acetyl-CoA from acetate: step 1/2. Functionally, catalyzes the formation of acetyl phosphate from acetate and ATP. Can also catalyze the reverse reaction. This chain is Acetate kinase, found in Bacteroides thetaiotaomicron (strain ATCC 29148 / DSM 2079 / JCM 5827 / CCUG 10774 / NCTC 10582 / VPI-5482 / E50).